The primary structure comprises 166 residues: Bud site selection protein 20 (166 aa).

A Nuclear localization signal motif is present at residues 7–16 (KRYKTKRRTR). The nuclear export signal-like (NES-like) stretch occupies residues 17-31 (DLDLIYNDLSTKESV). The C2H2-type zinc finger occupies 49–73 (HYCIHCAKYMETAIALKTHLKGKVH).

This sequence belongs to the ZNF593/BUD20 C2H2-type zinc-finger protein family. As to quaternary structure, associates with pre-60S ribosomal particles; released from the pre-60S particle very early in the cytoplasm.

It is found in the nucleus. Its subcellular location is the cytoplasm. Functionally, involved in pre-60S ribosomal particles maturation by promoting the nuclear export of the 60S ribosome. Involved in positioning the proximal bud pole signal. The polypeptide is Bud site selection protein 20 (Saccharomyces cerevisiae (strain ATCC 204508 / S288c) (Baker's yeast)).